The sequence spans 238 residues: Probable 2-phosphosulfolactate phosphatase (238 aa).

The protein belongs to the ComB family. The cofactor is Mg(2+).

It carries out the reaction (2R)-O-phospho-3-sulfolactate + H2O = (2R)-3-sulfolactate + phosphate. The chain is Probable 2-phosphosulfolactate phosphatase from Clostridium botulinum (strain Alaska E43 / Type E3).